A 256-amino-acid chain; its full sequence is tRNA-cytidine(32) 2-sulfurtransferase (256 aa).

The short motif at S35–S40 is the PP-loop motif element. C110, C113, and C201 together coordinate [4Fe-4S] cluster.

It belongs to the TtcA family. As to quaternary structure, homodimer. It depends on Mg(2+) as a cofactor. Requires [4Fe-4S] cluster as cofactor.

Its subcellular location is the cytoplasm. The enzyme catalyses cytidine(32) in tRNA + S-sulfanyl-L-cysteinyl-[cysteine desulfurase] + AH2 + ATP = 2-thiocytidine(32) in tRNA + L-cysteinyl-[cysteine desulfurase] + A + AMP + diphosphate + H(+). The protein operates within tRNA modification. Functionally, catalyzes the ATP-dependent 2-thiolation of cytidine in position 32 of tRNA, to form 2-thiocytidine (s(2)C32). The sulfur atoms are provided by the cysteine/cysteine desulfurase (IscS) system. This is tRNA-cytidine(32) 2-sulfurtransferase from Coxiella burnetii (strain RSA 493 / Nine Mile phase I).